Consider the following 227-residue polypeptide: MSKEIPTPYMWSYQPQMGLAAGAAQDYSTRINYMSAGPHMISRVNGIRAHRNRILLEQAAITTTPRNNLNPRSWPAALVYQESPAPTTVVLPRDAQAEVQMTNSGAQLAGGFRHRVRSPGQGITHLKIRGRGIQLNDESVSSSLGLRPDGTFQIGGAGRSSFTPRQAILTLQTSSSEPRSGGIGTLQFIEEFVPSVYFNPFSGPPGHYPDQFIPNFDAVKDSADGYD.

Threonine 64 bears the Phosphothreonine; by host mark. A propeptide spanning residues 112–157 (FRHRVRSPGQGITHLKIRGRGIQLNDESVSSSLGLRPDGTFQIGGA) is cleaved from the precursor. A phosphoserine; by host mark is found at serine 118 and serine 174.

Belongs to the adenoviridae hexon-linking protein family. Interacts with the peripentonal hexons as well as the hexons in the facets. Part of a complex composed of the core-capsid bridging protein, the endosome lysis protein VI and the hexon-linking protein VIII; these interactions bridge the virus core to the capsid. In terms of processing, cleaved by the viral protease during virion maturation. May cause the middle segment to be shed from the capsid.

The protein resides in the virion. The protein localises to the host nucleus. Functionally, structural component of the virion that acts as a cement protein on the capsid interior and which glue the peripentonal hexons and group-of-nine hexons together. The chain is Pre-hexon-linking protein VIII from Homo sapiens (Human).